We begin with the raw amino-acid sequence, 361 residues long: Carbon monoxide-induced hydrogenase (361 aa).

Residues Cys64, Cys67, Cys355, and Cys358 each contribute to the Ni(2+) site.

This sequence to E.coli formate hydrogenlyase hydrogenase isozyme 3 and to bovine mitochondrial NADH-ubiquinone oxidoreductase. It depends on Ni(2+) as a cofactor.

In terms of biological role, the carbon monoxide dehydrogenase (CODH) oxidizes carbon monoxide coupled, via CooF, to the reduction of a hydrogen cation by a hydrogenase (probably CooH). The polypeptide is Carbon monoxide-induced hydrogenase (cooH) (Rhodospirillum rubrum).